The following is a 126-amino-acid chain: Glycine cleavage system H protein (126 aa).

Positions 24–105 constitute a Lipoyl-binding domain; the sequence is TLTVGITDHA…AYGVWLFKIK (82 aa). Residue lysine 65 is modified to N6-lipoyllysine.

The protein belongs to the GcvH family. As to quaternary structure, the glycine cleavage system is composed of four proteins: P, T, L and H. Requires (R)-lipoate as cofactor.

The glycine cleavage system catalyzes the degradation of glycine. The H protein shuttles the methylamine group of glycine from the P protein to the T protein. The protein is Glycine cleavage system H protein of Burkholderia ambifaria (strain MC40-6).